The sequence spans 161 residues: Nucleotide-binding protein xcc-b100_3818 (161 aa).

Belongs to the YajQ family.

Its function is as follows. Nucleotide-binding protein. The chain is Nucleotide-binding protein xcc-b100_3818 from Xanthomonas campestris pv. campestris (strain B100).